Reading from the N-terminus, the 86-residue chain is Small ribosomal subunit protein uS17 (86 aa).

This sequence belongs to the universal ribosomal protein uS17 family. Part of the 30S ribosomal subunit.

Its function is as follows. One of the primary rRNA binding proteins, it binds specifically to the 5'-end of 16S ribosomal RNA. The sequence is that of Small ribosomal subunit protein uS17 from Halalkalibacterium halodurans (strain ATCC BAA-125 / DSM 18197 / FERM 7344 / JCM 9153 / C-125) (Bacillus halodurans).